A 502-amino-acid chain; its full sequence is UPF0371 protein CLD_0424 (502 aa).

Belongs to the UPF0371 family.

This is UPF0371 protein CLD_0424 from Clostridium botulinum (strain Okra / Type B1).